The sequence spans 123 residues: Immunoglobulin heavy variable 4-34 (123 aa).

An N-terminal signal peptide occupies residues 1–26 (MDLLHKNMKHLWFFLLLVAAPRWVLS). Residues 26–123 (SQVQLQQWGA…ADTAVYYCAR (98 aa)) are v region. The segment at 27–51 (QVQLQQWGAGLLKPSETLSLTCAVY) is framework-1. An Ig-like domain is found at 27-123 (QVQLQQWGAG…ADTAVYYCAR (97 aa)). C48 and C121 are disulfide-bonded. The complementarity-determining-1 stretch occupies residues 52–59 (GGSFSGYY). The interval 60–76 (WSWIRQPPGKGLEWIGE) is framework-2. A complementarity-determining-2 region spans residues 77–83 (INHSGST). N78 is a glycosylation site (N-linked (GlcNAc...) asparagine). The segment at 84–121 (NYNPSLKSRVTISVDTSKNQFSLKLSSVTAADTAVYYC) is framework-3. Positions 122–123 (AR) are complementarity-determining-3.

Immunoglobulins are composed of two identical heavy chains and two identical light chains; disulfide-linked.

It is found in the secreted. The protein localises to the cell membrane. In terms of biological role, v region of the variable domain of immunoglobulin heavy chains that participates in the antigen recognition. Immunoglobulins, also known as antibodies, are membrane-bound or secreted glycoproteins produced by B lymphocytes. In the recognition phase of humoral immunity, the membrane-bound immunoglobulins serve as receptors which, upon binding of a specific antigen, trigger the clonal expansion and differentiation of B lymphocytes into immunoglobulins-secreting plasma cells. Secreted immunoglobulins mediate the effector phase of humoral immunity, which results in the elimination of bound antigens. The antigen binding site is formed by the variable domain of one heavy chain, together with that of its associated light chain. Thus, each immunoglobulin has two antigen binding sites with remarkable affinity for a particular antigen. The variable domains are assembled by a process called V-(D)-J rearrangement and can then be subjected to somatic hypermutations which, after exposure to antigen and selection, allow affinity maturation for a particular antigen. The protein is Immunoglobulin heavy variable 4-34 of Homo sapiens (Human).